A 409-amino-acid polypeptide reads, in one-letter code: Elongation factor 1-gamma (409 aa).

One can recognise a GST N-terminal domain in the interval 2–81 (SVGTVYGKIG…YLASLNKTRA (80 aa)). In terms of domain architecture, GST C-terminal spans 86-212 (TAEEKAKVLQ…EPLKFIDQPL (127 aa)). Positions 219 to 248 (NKEAAPAKKAEKKKDEKKKNAPKPQAERPA) are enriched in basic and acidic residues. The interval 219–261 (NKEAAPAKKAEKKKDEKKKNAPKPQAERPAKPPKHPLASAPNG) is disordered. An EF-1-gamma C-terminal domain is found at 251–409 (PKHPLASAPN…REVADGKVCK (159 aa)).

In terms of assembly, EF-1 is composed of four subunits: alpha, beta, delta, and gamma.

Its function is as follows. Probably plays a role in anchoring the complex to other cellular components. The chain is Elongation factor 1-gamma (tef3) from Schizosaccharomyces pombe (strain 972 / ATCC 24843) (Fission yeast).